Here is a 428-residue protein sequence, read N- to C-terminus: D-amino acid dehydrogenase (428 aa).

3–17 (VVVLGSGVVGVTSAY) contributes to the FAD binding site.

This sequence belongs to the DadA oxidoreductase family. It depends on FAD as a cofactor.

The enzyme catalyses a D-alpha-amino acid + A + H2O = a 2-oxocarboxylate + AH2 + NH4(+). The protein operates within amino-acid degradation; D-alanine degradation; NH(3) and pyruvate from D-alanine: step 1/1. Its function is as follows. Oxidative deamination of D-amino acids. This chain is D-amino acid dehydrogenase, found in Paraburkholderia phymatum (strain DSM 17167 / CIP 108236 / LMG 21445 / STM815) (Burkholderia phymatum).